The primary structure comprises 934 residues: Protein translocase subunit SecA (934 aa).

Residues glutamine 87, 105-109, and aspartate 515 contribute to the ATP site; that span reads GEGKT. The Zn(2+) site is built by cysteine 918, cysteine 920, cysteine 929, and histidine 930.

This sequence belongs to the SecA family. Monomer and homodimer. Part of the essential Sec protein translocation apparatus which comprises SecA, SecYEG and auxiliary proteins SecDF-YajC and YidC. Zn(2+) serves as cofactor.

The protein localises to the cell inner membrane. The protein resides in the cytoplasm. The catalysed reaction is ATP + H2O + cellular proteinSide 1 = ADP + phosphate + cellular proteinSide 2.. Its function is as follows. Part of the Sec protein translocase complex. Interacts with the SecYEG preprotein conducting channel. Has a central role in coupling the hydrolysis of ATP to the transfer of proteins into and across the cell membrane, serving both as a receptor for the preprotein-SecB complex and as an ATP-driven molecular motor driving the stepwise translocation of polypeptide chains across the membrane. The chain is Protein translocase subunit SecA from Ralstonia nicotianae (strain ATCC BAA-1114 / GMI1000) (Ralstonia solanacearum).